The sequence spans 246 residues: MIIPAFDLINGRTVRLYQGDYSNQKNYNVNLFNSLEVYKSKGIEIVHLVDLDGAKNSANRQIELFKKIVSHTTVPVQVGGGIRTTKDISTLLDLGVKRVVIGSSIVSNKKQVKQWLNFYGPDAIVLALDVHVDGSNKKEISIDGWQKKTNFILEEIIEYFLSSGLKHVLCTDISRDGTLLGPNFKLYKEICSNFKNINFQASGGVASLQDIIFLKKTGVKSIIIGRSLLEKKFTIEEAVKCWQRES.

Asp7 (proton acceptor) is an active-site residue. Asp129 acts as the Proton donor in catalysis.

This sequence belongs to the HisA/HisF family.

It is found in the cytoplasm. The enzyme catalyses 1-(5-phospho-beta-D-ribosyl)-5-[(5-phospho-beta-D-ribosylamino)methylideneamino]imidazole-4-carboxamide = 5-[(5-phospho-1-deoxy-D-ribulos-1-ylimino)methylamino]-1-(5-phospho-beta-D-ribosyl)imidazole-4-carboxamide. Its pathway is amino-acid biosynthesis; L-histidine biosynthesis; L-histidine from 5-phospho-alpha-D-ribose 1-diphosphate: step 4/9. The protein is 1-(5-phosphoribosyl)-5-[(5-phosphoribosylamino)methylideneamino] imidazole-4-carboxamide isomerase of Buchnera aphidicola subsp. Acyrthosiphon pisum (strain 5A).